Consider the following 1337-residue polypeptide: Protein cordon-bleu (1337 aa).

The interval 1-41 (MDAPRALAAKPPTGRKMKARAPPPPGKPAAQNVHSEQKLPH) is disordered. Residues Ser-47, Ser-50, Ser-212, Ser-235, Ser-272, and Ser-294 each carry the phosphoserine modification. Disordered regions lie at residues 260–556 (SKAE…NDDE) and 647–768 (IASQ…HHGQ). Over residues 288-317 (CVTTPNSPSLHSRSLTLGPSLSLGNISGVS) the composition is skewed to polar residues. The KKRRAP 1 signature appears at 323 to 328 (KKRRAP). Ser-346 and Ser-349 each carry phosphoserine. Positions 356–361 (KKRRAP) match the KKRRAP 2 motif. Residues 361 to 374 (PAPPPPQQPPPSPV) are compositionally biased toward pro residues. Ser-372 is subject to Phosphoserine. The span at 377 to 387 (NRKEDKEENRK) shows a compositional bias: basic and acidic residues. Positions 411-423 (LVLPPPPPYPPPD) are enriched in pro residues. Positions 469 to 480 (ESEETASEDTTE) are enriched in acidic residues. Residues 484 to 500 (VMSSPSDAISLDSQQDS) are compositionally biased toward polar residues. Thr-522 is subject to Phosphothreonine. Positions 526–541 (GPQKSPSWGKSGSGSS) are enriched in low complexity. 2 stretches are compositionally biased toward polar residues: residues 647 to 666 (IASQ…QPFV) and 687 to 710 (QPTL…TSLV). Ser-649 carries the post-translational modification Phosphoserine. Over residues 714–736 (LIDDPKAKDKGKVHGSSHSEKTQ) the composition is skewed to basic and acidic residues. Ser-816 bears the Phosphoserine mark. Disordered stretches follow at residues 892 to 923 (TPQQ…SVKV) and 967 to 991 (KATT…DDAA). Ser-1038 is subject to Phosphoserine. Over residues 1070–1090 (GFNEKQTTSNQKANSTSNFSQ) the composition is skewed to polar residues. Disordered stretches follow at residues 1070–1094 (GFNE…ALDK), 1113–1133 (MNGS…KEST), 1145–1168 (KPSS…FGPK), and 1192–1221 (AIHS…SYVE). Residue Ser-1128 is modified to Phosphoserine. 2 WH2 domains span residues 1185–1205 (LHSA…LRKT) and 1225–1245 (ERSA…LRKV). Basic and acidic residues predominate over residues 1197–1214 (GGREKLRKTAEQTSEGRP). Residues 1262–1310 (GAPGLDKPQQEDLGLPPPPALPPPPAPAPQAPSASVTVSRFSTGTPSNS) are disordered. The span at 1276–1291 (LPPPPALPPPPAPAPQ) shows a compositional bias: pro residues. The segment covering 1297–1310 (VTVSRFSTGTPSNS) has biased composition (polar residues). At Ser-1303 the chain carries Phosphoserine. The 21-residue stretch at 1313-1333 (ARQALMDAIRSGTGAARLRKV) folds into the WH2 3 domain.

As to quaternary structure, identified in a complex composed of COBL, PACSIN1 and WASL. Interacts with PACSIN1, PACSIN2 and PACSIN3. Identified in a complex composed of ACTA1, COBL, GSN and TMSB4X. Interacts (via WH2 domains) with actin monomers. Interacts with DBNL. As to expression, detected in brain cortex and in the Purkinje cell layer in the cerebellum. Detected in hippocampus neurons, and at lower levels in testis, lung and spleen (at protein level). Detected in embryonic neural tube.

The protein resides in the cell membrane. Its subcellular location is the cytoplasm. It is found in the cytoskeleton. It localises to the cell projection. The protein localises to the ruffle. Functionally, plays an important role in the reorganization of the actin cytoskeleton. Binds to and sequesters actin monomers (G actin). Nucleates actin polymerization by assembling three actin monomers in cross-filament orientation and thereby promotes growth of actin filaments at the barbed end. Can also mediate actin depolymerization at barbed ends and severing of actin filaments. Promotes formation of cell ruffles. Regulates neuron morphogenesis and increases branching of axons and dendrites. Regulates dendrite branching in Purkinje cells. The sequence is that of Protein cordon-bleu (Cobl) from Mus musculus (Mouse).